The following is a 943-amino-acid chain: UvrABC system protein A (943 aa).

Position 31–38 (Gly-31–Ser-38) interacts with ATP. A C4-type zinc finger spans residues Cys-253–Cys-280. ABC transporter domains follow at residues Trp-310–Ile-587 and Leu-607–Lys-937. ATP is bound at residue Gly-640 to Ser-647. The segment at Cys-740–Cys-766 adopts a C4-type zinc-finger fold.

It belongs to the ABC transporter superfamily. UvrA family. Forms a heterotetramer with UvrB during the search for lesions.

The protein resides in the cytoplasm. In terms of biological role, the UvrABC repair system catalyzes the recognition and processing of DNA lesions. UvrA is an ATPase and a DNA-binding protein. A damage recognition complex composed of 2 UvrA and 2 UvrB subunits scans DNA for abnormalities. When the presence of a lesion has been verified by UvrB, the UvrA molecules dissociate. This chain is UvrABC system protein A, found in Pasteurella multocida (strain Pm70).